The following is an 897-amino-acid chain: Patched domain-containing protein 1 (897 aa).

Residues 25–45 form a helical membrane-spanning segment; the sequence is PVFFLTVPAVLTIIFGSTVLS. 3 N-linked (GlcNAc...) asparagine glycosylation sites follow: asparagine 132, asparagine 167, and asparagine 179. 2 helical membrane-spanning segments follow: residues 271–291 and 306–326; these read GVLA…AATI and GLLG…IFFI. One can recognise an SSD domain in the interval 273–433; that stretch reads LAKSEVLVSL…FSFYGSCLVF (161 aa). Asparagine 332 carries N-linked (GlcNAc...) asparagine glycosylation. Transmembrane regions (helical) follow at residues 335–355, 377–397, 414–434, and 506–526; these read LLGI…ELLA, VMVC…MGAS, VAVL…LVFA, and PFVV…CLQI. N-linked (GlcNAc...) asparagine glycans are attached at residues asparagine 572 and asparagine 603. The next 3 helical transmembrane spans lie at 701–721, 727–747, and 754–774; these read PILT…FLVI, FWLI…MTLW, and ISIL…APHL. N-linked (GlcNAc...) asparagine glycosylation is present at asparagine 803. 2 consecutive transmembrane segments (helical) span residues 806 to 826 and 831 to 851; these read CFVI…YTLF and LTAG…LTFF. Positions 856–866 are enriched in basic residues; it reads KRHKKKKRAKR. Residues 856 to 881 are disordered; the sequence is KRHKKKKRAKRKEREREREREREREE. Over residues 867-881 the composition is skewed to basic and acidic residues; sequence KEREREREREREREE.

The protein belongs to the patched family.

The protein resides in the cell membrane. It localises to the cell projection. Its subcellular location is the dendritic spine. In terms of biological role, can bind cholesterol in vitro. The sequence is that of Patched domain-containing protein 1 (ptchd1) from Danio rerio (Zebrafish).